Here is a 470-residue protein sequence, read N- to C-terminus: mRNA export factor ICP27 homolog (470 aa).

2 disordered regions span residues 1 to 31 (MALSSVSSCEPMEDEMSIMGSDTEDNFTGGD) and 62 to 204 (VGDP…DRLN). The segment covering 71–85 (VSFSASPQRAQPSNP) has biased composition (polar residues). 2 stretches are compositionally biased toward basic residues: residues 94–107 (HGRRNRRRPFRRNN) and 178–187 (RVHRNRRRGN). Zn(2+)-binding residues include C359, H437, C441, and C446. The CHC2-type zinc-finger motif lies at 359 to 446 (CYLSSSGSPT…HKRRCKADTC (88 aa)).

It belongs to the HHV-1 ICP27 protein family. Homodimer. Homodimerization is required for transactivation. Associates in a complex with RNA, and host export factors NXF1/TAP and ALYREF; these interactions allow nuclear export of viral transcripts. Interacts with three host shuttling SR proteins SRSF1, SRSF3 and SRSF7. Interacts with host SRPK1. Interacts with IE62; this interaction enhances IE62 transactivation.

The protein localises to the host cytoplasm. It localises to the host nucleus. In terms of biological role, multifunctional regulator of the expression of viral genes that mediates nuclear export of viral intronless mRNAs. This immediate early (EI) protein promotes the nuclear export of viral intronless mRNAs by interacting with mRNAs and host NXF1/TAP. The protein is mRNA export factor ICP27 homolog of Equine herpesvirus 1 (strain Ab4p) (EHV-1).